The following is a 1792-amino-acid chain: BTB/POZ domain-containing protein 8 (1792 aa).

2 BTB domains span residues 58–127 (TDVT…NIKN) and 206–273 (PDID…DIPD). Disordered stretches follow at residues 528 to 554 (DKGDDRRLGKKPIFSSSQQRKQVSDSG), 581 to 658 (SDGL…PRQV), 670 to 692 (TGQKNLLNGKGVRNQEGQISGAR), 707 to 768 (KPLK…CDSP), 788 to 815 (SRPVSRVTNGTSNKKSIHEQDTNVNNSV), 831 to 989 (AILK…KPHK), 1151 to 1283 (ERTN…SNDR), and 1519 to 1607 (SIDS…KSLD). 2 stretches are compositionally biased toward polar residues: residues 541–552 (FSSSQQRKQVSD) and 588–601 (GHSSSTNRNSINKT). Basic and acidic residues-rich tracts occupy residues 602 to 625 (LKQDDVKEKDGTKIASKITKELKT) and 640 to 650 (SKTENGDKARL). The span at 724-740 (GPSSRSTDSSMEFSIST) shows a compositional bias: polar residues. The segment covering 744–758 (DEPKENGSTEEEKPS) has biased composition (basic and acidic residues). Residues 838-865 (TSNGCTAAQQRTKSTPSNLTKTQGSQGE) are compositionally biased toward polar residues. Over residues 866-877 (SPNSVKSSVSSR) the composition is skewed to low complexity. 2 stretches are compositionally biased toward basic and acidic residues: residues 878-891 (QSDENVAKLDHNTT) and 927-939 (KKGETLNNKDSKQ). Residues 947-956 (ISKTQPSSQR) are compositionally biased toward polar residues. Basic and acidic residues predominate over residues 969–987 (MFHDVRDNNNKDSVSEQKP). Composition is skewed to polar residues over residues 1151–1160 (ERTNGTLNSA) and 1195–1215 (SDVSSKCFSGQLSEKNSPKNM). The span at 1250–1259 (SDTGSATTSS) shows a compositional bias: low complexity. The span at 1566–1594 (IQQRSKFLDSDVKSQERPCHLDLHQREPN) shows a compositional bias: basic and acidic residues. The span at 1597–1607 (IPKNSSTKSLD) shows a compositional bias: polar residues.

Interacts (via N-terminus) with adapter protein complex AP-2 subunits alpha (AP2A1) and beta (AP2B1). Highly expressed in fetal brain. Weakly expressed in adult brain and prostate.

The protein localises to the cell projection. It is found in the axon. The protein resides in the presynapse. It localises to the cytoplasmic vesicle. Its subcellular location is the clathrin-coated vesicle. The protein localises to the nucleus. Its function is as follows. Involved in clathrin-mediated endocytosis at the synapse. Plays a role in neuronal development and in synaptic vesicle recycling in mature neurons, a process required for normal synaptic transmission. The chain is BTB/POZ domain-containing protein 8 from Homo sapiens (Human).